A 1168-amino-acid polypeptide reads, in one-letter code: Zinc finger CCHC domain-containing protein 2 (1168 aa).

Disordered stretches follow at residues 1-87 (MLRM…GGHA), 209-242 (EGSR…CAKL), 561-693 (KRSL…LGTE), and 932-978 (ATSA…SDST). Residues 43-66 (PPPPPPTGLPRGPPPPPPSPPRGL) are compositionally biased toward pro residues. Residues 67–78 (EPPVASGPTAGA) show a composition bias toward low complexity. Over residues 216-227 (EDEPGGDDEQDA) the composition is skewed to acidic residues. A compositionally biased stretch (gly residues) spans 233 to 242 (GPEGGGCAKL). Over residues 574-588 (PQVEKEKIKKTENRL) the composition is skewed to basic and acidic residues. Positions 626–635 (SSESYSSPSS) are enriched in low complexity. Residues 636-655 (PRHDGRESLESEEEKDRDTD) are compositionally biased toward basic and acidic residues. The span at 932-949 (ATSAQPASTGISPAQSTV) shows a compositional bias: polar residues. The span at 951 to 965 (PAVPTHTPGPAPSPS) shows a compositional bias: pro residues. Residues 966 to 978 (PALTHSTAQSDST) are compositionally biased toward polar residues. The CCHC-type zinc-finger motif lies at 1121 to 1138 (VSCYNCGVSGHYAQDCKQ).

This chain is Zinc finger CCHC domain-containing protein 2 (Zcchc2), found in Rattus norvegicus (Rat).